The following is a 457-amino-acid chain: Acetylcholine receptor subunit alpha (457 aa).

The first 20 residues, 1–20 (MEPRPLLLLLGLCSAGLVLG), serve as a signal peptide directing secretion. Over 21–230 (SEHETRLVAK…ITYHFVMQRL (210 aa)) the chain is Extracellular. Disulfide bonds link C148–C162 and C212–C213. The N-linked (GlcNAc...) asparagine glycan is linked to N161. 3 helical membrane passes run 231–255 (PLYF…VFYL), 263–281 (MTLS…LVIV), and 297–316 (YMLF…VIVI). Residues 317–428 (NTHHRSPSTH…WKYVAMVMDH (112 aa)) are Cytoplasmic-facing. A helical transmembrane segment spans residues 429–447 (ILLAVFMLVCIIGTLAVFA).

Belongs to the ligand-gated ion channel (TC 1.A.9) family. Acetylcholine receptor (TC 1.A.9.1) subfamily. Alpha-1/CHRNA1 sub-subfamily. One of the alpha chains that assemble within the acetylcholine receptor, a pentamer of two alpha chains, a beta, a delta, and a gamma (in immature muscle) or epsilon (in mature muscle) chains. The muscle heteropentamer composed of alpha-1, beta-1, delta, epsilon subunits interacts with the alpha-conotoxin ImII.

Its subcellular location is the postsynaptic cell membrane. The protein localises to the cell membrane. It carries out the reaction K(+)(in) = K(+)(out). The enzyme catalyses Na(+)(in) = Na(+)(out). Its function is as follows. Upon acetylcholine binding, the AChR responds by an extensive change in conformation that affects all subunits and leads to opening of an ion-conducting channel across the plasma membrane. This Bos taurus (Bovine) protein is Acetylcholine receptor subunit alpha (CHRNA1).